A 235-amino-acid chain; its full sequence is Uridylate kinase (235 aa).

9 to 12 is a binding site for ATP; the sequence is KLSG. The segment at 17-22 is involved in allosteric activation by GTP; that stretch reads GNQGYG. Gly51 lines the UMP pocket. ATP-binding residues include Gly52 and Arg56. UMP contacts are provided by residues Asp71 and 132–139; that span reads CGNPFFTT. Residues Thr159, Tyr165, and Asp168 each coordinate ATP.

The protein belongs to the UMP kinase family. As to quaternary structure, homohexamer.

It localises to the cytoplasm. It catalyses the reaction UMP + ATP = UDP + ADP. It functions in the pathway pyrimidine metabolism; CTP biosynthesis via de novo pathway; UDP from UMP (UMPK route): step 1/1. Its activity is regulated as follows. Allosterically activated by GTP. Inhibited by UTP. In terms of biological role, catalyzes the reversible phosphorylation of UMP to UDP. This is Uridylate kinase from Synechococcus sp. (strain CC9311).